A 203-amino-acid chain; its full sequence is CASP-like protein 4B2 (203 aa).

Over 1–57 (MAMVTADASAAADAATKQPDVEKDYSSYNGASTAGAGGGGVVESVVARWRREDMLDK) the chain is Cytoplasmic. Residues 58-78 (CPLALHAAAAAFAFVALVLVA) traverse the membrane as a helical segment. Over 79–92 (SNQHGDWMQFDRYQ) the chain is Extracellular. The chain crosses the membrane as a helical span at residues 93-113 (EYMYLLAIAALAFAYSLAQAL). Residues 114-135 (RHAHRMRGGADPIPAPSARLFD) lie on the Cytoplasmic side of the membrane. A helical transmembrane segment spans residues 136-156 (FIADQVVAYLLMSALSAAIPI). The Extracellular segment spans residues 157–171 (TNRMRTAVINNFTDA). N-linked (GlcNAc...) asparagine glycosylation occurs at Asn-167. The helical transmembrane segment at 172 to 192 (TAAAISMAFLAFVALALSATV) threads the bilayer. The Cytoplasmic portion of the chain corresponds to 193–203 (SGYKLSRQMYM).

It belongs to the Casparian strip membrane proteins (CASP) family. Homodimer and heterodimers.

It localises to the cell membrane. In Hordeum vulgare subsp. vulgare (Domesticated barley), this protein is CASP-like protein 4B2.